A 106-amino-acid chain; its full sequence is Large ribosomal subunit protein uL24 (106 aa).

Belongs to the universal ribosomal protein uL24 family. As to quaternary structure, part of the 50S ribosomal subunit.

In terms of biological role, one of two assembly initiator proteins, it binds directly to the 5'-end of the 23S rRNA, where it nucleates assembly of the 50S subunit. Functionally, one of the proteins that surrounds the polypeptide exit tunnel on the outside of the subunit. This Acidithiobacillus ferrooxidans (strain ATCC 53993 / BNL-5-31) (Leptospirillum ferrooxidans (ATCC 53993)) protein is Large ribosomal subunit protein uL24.